The sequence spans 229 residues: Ribonuclease 3 (229 aa).

Residues 5 to 127 (LARLERKLGY…LIGAIYLDAD (123 aa)) form the RNase III domain. Residue glutamate 40 participates in Mg(2+) binding. The active site involves aspartate 44. 2 residues coordinate Mg(2+): aspartate 113 and glutamate 116. The active site involves glutamate 116. Residues 154–224 (DPKTRLQEFL…AASALIALGV (71 aa)) form the DRBM domain.

The protein belongs to the ribonuclease III family. As to quaternary structure, homodimer. The cofactor is Mg(2+).

The protein localises to the cytoplasm. It carries out the reaction Endonucleolytic cleavage to 5'-phosphomonoester.. Functionally, digests double-stranded RNA. Involved in the processing of primary rRNA transcript to yield the immediate precursors to the large and small rRNAs (23S and 16S). Processes some mRNAs, and tRNAs when they are encoded in the rRNA operon. Processes pre-crRNA and tracrRNA of type II CRISPR loci if present in the organism. This Pseudomonas putida (strain GB-1) protein is Ribonuclease 3.